The chain runs to 199 residues: Putative pseudouridine methyltransferase (199 aa).

Leu132 and Cys186 together coordinate S-adenosyl-L-methionine.

The protein belongs to the methyltransferase superfamily. TrmY family.

The protein resides in the cytoplasm. This Vibrio campbellii (strain ATCC BAA-1116) protein is Putative pseudouridine methyltransferase.